An 860-amino-acid chain; its full sequence is Leucine--tRNA ligase (860 aa).

A 'HIGH' region motif is present at residues 42–52; the sequence is PYPSGRLHMGH. Positions 619 to 623 match the 'KMSKS' region motif; sequence KMSKS. Lysine 622 provides a ligand contact to ATP.

Belongs to the class-I aminoacyl-tRNA synthetase family.

It is found in the cytoplasm. The catalysed reaction is tRNA(Leu) + L-leucine + ATP = L-leucyl-tRNA(Leu) + AMP + diphosphate. The protein is Leucine--tRNA ligase of Histophilus somni (strain 2336) (Haemophilus somnus).